A 505-amino-acid chain; its full sequence is Xylose import ATP-binding protein XylG (505 aa).

2 consecutive ABC transporter domains span residues 6–243 (LEMR…VGRE) and 262–505 (VKNY…TGGK). 38-45 (GENGAGKS) lines the ATP pocket.

Belongs to the ABC transporter superfamily. Xylose importer (TC 3.A.1.2.4) family. The complex is composed of two ATP-binding proteins (XylG), two transmembrane proteins (XylH) and a solute-binding protein (XylF).

It localises to the cell membrane. The enzyme catalyses D-xylose(out) + ATP + H2O = D-xylose(in) + ADP + phosphate + H(+). In terms of biological role, part of the ABC transporter complex XylFGH involved in xylose import. Responsible for energy coupling to the transport system. In Thermoanaerobacter pseudethanolicus (strain ATCC 33223 / 39E) (Clostridium thermohydrosulfuricum), this protein is Xylose import ATP-binding protein XylG.